Consider the following 527-residue polypeptide: DNA polymerase epsilon subunit 2 (527 aa).

The protein belongs to the DNA polymerase epsilon subunit B family. In terms of assembly, component of the DNA polymerase epsilon complex consisting of four subunits: the catalytic subunit POLE and the accessory subunits POLE2, POLE3 and POLE4.

Its subcellular location is the nucleus. In terms of biological role, accessory component of the DNA polymerase epsilon complex. Participates in DNA repair and in chromosomal DNA replication. The chain is DNA polymerase epsilon subunit 2 (Pole2) from Mus musculus (Mouse).